The chain runs to 1814 residues: U3 small nucleolar RNA-associated protein 10 (1814 aa).

The stretch at 583 to 620 (LDFQALLPFLLVALTDASERVRREAAAALAAVGSLYKK) is one HEAT 1 repeat. The next 2 helical transmembrane spans lie at 942 to 962 (IQSG…AIVN) and 998 to 1018 (ALLL…HSVM). HEAT repeat units follow at residues 1042 to 1079 (QTID…AFEH), 1249 to 1286 (LTLV…QNPE), 1293 to 1331 (IRVL…KYGK), and 1770 to 1807 (ALLP…VLGE).

The protein belongs to the HEATR1/UTP10 family. Component of the ribosomal small subunit (SSU) processome.

The protein resides in the nucleus. The protein localises to the nucleolus. It is found in the membrane. Functionally, involved in nucleolar processing of pre-18S ribosomal RNA. Involved in ribosome biosynthesis. In Neosartorya fischeri (strain ATCC 1020 / DSM 3700 / CBS 544.65 / FGSC A1164 / JCM 1740 / NRRL 181 / WB 181) (Aspergillus fischerianus), this protein is U3 small nucleolar RNA-associated protein 10.